A 219-amino-acid chain; its full sequence is 2-C-methyl-D-erythritol 4-phosphate cytidylyltransferase (219 aa).

It belongs to the IspD/TarI cytidylyltransferase family. IspD subfamily.

It catalyses the reaction 2-C-methyl-D-erythritol 4-phosphate + CTP + H(+) = 4-CDP-2-C-methyl-D-erythritol + diphosphate. It functions in the pathway isoprenoid biosynthesis; isopentenyl diphosphate biosynthesis via DXP pathway; isopentenyl diphosphate from 1-deoxy-D-xylulose 5-phosphate: step 2/6. In terms of biological role, catalyzes the formation of 4-diphosphocytidyl-2-C-methyl-D-erythritol from CTP and 2-C-methyl-D-erythritol 4-phosphate (MEP). The sequence is that of 2-C-methyl-D-erythritol 4-phosphate cytidylyltransferase from Bacteroides thetaiotaomicron (strain ATCC 29148 / DSM 2079 / JCM 5827 / CCUG 10774 / NCTC 10582 / VPI-5482 / E50).